We begin with the raw amino-acid sequence, 165 residues long: Transcription elongation factor GreA (165 aa).

Residues 55 to 78 adopt a coiled-coil conformation; it reads AAKEEQGKQELRVRQLTQLLESAK.

It belongs to the GreA/GreB family.

Necessary for efficient RNA polymerase transcription elongation past template-encoded arresting sites. The arresting sites in DNA have the property of trapping a certain fraction of elongating RNA polymerases that pass through, resulting in locked ternary complexes. Cleavage of the nascent transcript by cleavage factors such as GreA or GreB allows the resumption of elongation from the new 3'terminus. GreA releases sequences of 2 to 3 nucleotides. This chain is Transcription elongation factor GreA, found in Streptomyces coelicolor (strain ATCC BAA-471 / A3(2) / M145).